Reading from the N-terminus, the 493-residue chain is Cobyric acid synthase (493 aa).

In terms of domain architecture, GATase cobBQ-type spans 252 to 440 (PVKIVVLRLR…IHGIFESDSL (189 aa)). The active-site Nucleophile is the Cys333. His432 is a catalytic residue.

This sequence belongs to the CobB/CobQ family. CobQ subfamily.

Its pathway is cofactor biosynthesis; adenosylcobalamin biosynthesis. Functionally, catalyzes amidations at positions B, D, E, and G on adenosylcobyrinic A,C-diamide. NH(2) groups are provided by glutamine, and one molecule of ATP is hydrogenolyzed for each amidation. The polypeptide is Cobyric acid synthase (Thermodesulfovibrio yellowstonii (strain ATCC 51303 / DSM 11347 / YP87)).